Consider the following 452-residue polypeptide: FAD transporter (452 aa).

12 consecutive transmembrane segments (helical) span residues leucine 21–isoleucine 41, leucine 49–valine 69, alanine 96–glutamate 116, leucine 131–valine 151, methionine 167–isoleucine 187, alanine 199–isoleucine 219, alanine 248–aspartate 270, leucine 283–alanine 303, phenylalanine 324–alanine 344, leucine 357–phenylalanine 377, valine 392–isoleucine 412, and glycine 417–alanine 437.

It belongs to the multi antimicrobial extrusion (MATE) (TC 2.A.66.1) family.

It is found in the cell inner membrane. In terms of biological role, flavin adenine dinucleotide (FAD) transporter that facilitates export of flavin electron shuttles. This Shewanella oneidensis (strain ATCC 700550 / JCM 31522 / CIP 106686 / LMG 19005 / NCIMB 14063 / MR-1) protein is FAD transporter.